The primary structure comprises 59 residues: U-actitoxin-Aer2b (59 aa).

Post-translationally, contains 5 disulfide bonds.

The protein localises to the secreted. It localises to the nematocyst. In Anemonia erythraea (Sea anemone), this protein is U-actitoxin-Aer2b.